The primary structure comprises 543 residues: ADIPOR-like receptor IZH3 (543 aa).

At 1–259 (MMDSSSKSLT…NWYGWHNETS (259 aa)) the chain is on the lumenal side. N-linked (GlcNAc...) asparagine glycosylation is found at asparagine 45, asparagine 123, asparagine 153, and asparagine 256. The chain crosses the membrane as a helical span at residues 260-280 (NIWSHLLGAIYIIYLAIYDFP). The Cytoplasmic portion of the chain corresponds to 281-295 (QSEVWRNSQVPPQAR). Residues 296–316 (WIVFMFLAAALKCMLSSVFWH) traverse the membrane as a helical segment. The Lumenal portion of the chain corresponds to 317–330 (TFNGTSFLKLRSKF). Residue asparagine 319 is glycosylated (N-linked (GlcNAc...) asparagine). The chain crosses the membrane as a helical span at residues 331–353 (ACVDYSGITILITASILTTEFVT). Over 354-357 (MYSC) the chain is Cytoplasmic. A helical membrane pass occupies residues 358–378 (YWAMYTYMSISLALGVFGVFM). Residues 379 to 395 (NWSPRFDRPEARPLRIR) are Lumenal-facing. Residues 396–416 (FFILLATMGVLSFLHLIFLTD) form a helical membrane-spanning segment. Residues 417-425 (LHYAATLFS) lie on the Cytoplasmic side of the membrane. A helical transmembrane segment spans residues 426-446 (PVTYKSVVWYLVGVVFYGSFI). The Lumenal portion of the chain corresponds to 447 to 505 (PERFRSDVQVDKTIPTNYELSTDLEIITKQREIHFREVPTAHSKCSSCPSHAKSFKSLW). A helical transmembrane segment spans residues 506-526 (WVDYFGCSHTFWHFFVVLGVI). Topologically, residues 527 to 543 (GHYRAILDMFAKRWILS) are cytoplasmic.

The protein belongs to the ADIPOR family.

The protein resides in the endoplasmic reticulum membrane. Its function is as follows. ADIPOR-like receptor involved in zinc metabolism either by altering membrane sterol content or by directly altering cellular zinc levels. The chain is ADIPOR-like receptor IZH3 (IZH3) from Saccharomyces cerevisiae (strain ATCC 204508 / S288c) (Baker's yeast).